Here is a 303-residue protein sequence, read N- to C-terminus: MSNIVSPFSGSSRTTSDVGKQAGGTSDEKLIESLFSEKAVKEIAAECKLGCYNYLKSNEPRNYIDLVPKSHVSAWLSWATSKYDKGELPSRGFMNVPRIVCFLVRTTDSAESGSITVSLCDSGKAARAGVLEAIDNQEATIQLSALPALIALTPSYDCPMEVIGGDSGRNRCFGIATQLSGVVGTTGSVAVTHAYWQANFKAKPNNYKLHGPATIMVMPFDRLRQLDKKSLKNYIRGISNQSVDHGYLLGRPLQSVDQVAQEDLLVEESESPSALGRGVKDSKSVSASSVAGLPVSSPTLRIK.

Positions Met-1–Val-18 are enriched in polar residues. Disordered stretches follow at residues Met-1 to Gly-24 and Glu-267 to Lys-303.

It belongs to the bromovirus movement protein family. In terms of processing, phosphorylated by host.

The protein resides in the host cell junction. It is found in the host plasmodesma. In terms of biological role, transports viral genome to neighboring plant cells directly through plasmosdesmata, without any budding. The movement protein allows efficient cell to cell propagation, by bypassing the host cell wall barrier. Acts by forming a tubular structure at the host plasmodesmata, enlarging it enough to allow free passage of virion capsids. The sequence is that of Movement protein from Brome mosaic virus (BMV).